A 373-amino-acid chain; its full sequence is Lipoyl synthase, mitochondrial (373 aa).

Residues 1–26 (MALRCWDAARSLGSRIFGRYACSVRA) constitute a mitochondrion transit peptide. C105, C110, C116, C136, C140, C143, and S351 together coordinate [4Fe-4S] cluster. Residues 121–340 (EYATATATIM…EEVGNELGFH (220 aa)) form the Radical SAM core domain.

The protein belongs to the radical SAM superfamily. Lipoyl synthase family. It depends on [4Fe-4S] cluster as a cofactor.

Its subcellular location is the mitochondrion. It carries out the reaction [[Fe-S] cluster scaffold protein carrying a second [4Fe-4S](2+) cluster] + N(6)-octanoyl-L-lysyl-[protein] + 2 oxidized [2Fe-2S]-[ferredoxin] + 2 S-adenosyl-L-methionine + 4 H(+) = [[Fe-S] cluster scaffold protein] + N(6)-[(R)-dihydrolipoyl]-L-lysyl-[protein] + 4 Fe(3+) + 2 hydrogen sulfide + 2 5'-deoxyadenosine + 2 L-methionine + 2 reduced [2Fe-2S]-[ferredoxin]. Its pathway is protein modification; protein lipoylation via endogenous pathway; protein N(6)-(lipoyl)lysine from octanoyl-[acyl-carrier-protein]: step 2/2. Its function is as follows. Catalyzes the radical-mediated insertion of two sulfur atoms into the C-6 and C-8 positions of the octanoyl moiety bound to the lipoyl domains of lipoate-dependent enzymes, thereby converting the octanoylated domains into lipoylated derivatives. The sequence is that of Lipoyl synthase, mitochondrial (Lias) from Rattus norvegicus (Rat).